A 317-amino-acid polypeptide reads, in one-letter code: Methionyl-tRNA formyltransferase (317 aa).

(6S)-5,6,7,8-tetrahydrofolate is bound at residue 113-116; it reads SLLP.

The protein belongs to the Fmt family.

The catalysed reaction is L-methionyl-tRNA(fMet) + (6R)-10-formyltetrahydrofolate = N-formyl-L-methionyl-tRNA(fMet) + (6S)-5,6,7,8-tetrahydrofolate + H(+). Attaches a formyl group to the free amino group of methionyl-tRNA(fMet). The formyl group appears to play a dual role in the initiator identity of N-formylmethionyl-tRNA by promoting its recognition by IF2 and preventing the misappropriation of this tRNA by the elongation apparatus. The protein is Methionyl-tRNA formyltransferase of Pseudomonas fluorescens (strain SBW25).